The chain runs to 375 residues: 23S rRNA (uracil(747)-C(5))-methyltransferase RlmC (375 aa).

C3, C11, C14, and C87 together coordinate [4Fe-4S] cluster. Q212, F241, E262, and N307 together coordinate S-adenosyl-L-methionine. The active-site Nucleophile is the C334.

It belongs to the class I-like SAM-binding methyltransferase superfamily. RNA M5U methyltransferase family. RlmC subfamily.

The catalysed reaction is uridine(747) in 23S rRNA + S-adenosyl-L-methionine = 5-methyluridine(747) in 23S rRNA + S-adenosyl-L-homocysteine + H(+). Functionally, catalyzes the formation of 5-methyl-uridine at position 747 (m5U747) in 23S rRNA. This chain is 23S rRNA (uracil(747)-C(5))-methyltransferase RlmC, found in Escherichia coli (strain SE11).